We begin with the raw amino-acid sequence, 505 residues long: ATP synthase subunit alpha (505 aa).

170 to 177 (GDRQTGKT) provides a ligand contact to ATP.

Belongs to the ATPase alpha/beta chains family. F-type ATPases have 2 components, CF(1) - the catalytic core - and CF(0) - the membrane proton channel. CF(1) has five subunits: alpha(3), beta(3), gamma(1), delta(1), epsilon(1). CF(0) has four main subunits: a(1), b(1), b'(1) and c(9-12).

The protein resides in the cellular thylakoid membrane. It carries out the reaction ATP + H2O + 4 H(+)(in) = ADP + phosphate + 5 H(+)(out). Produces ATP from ADP in the presence of a proton gradient across the membrane. The alpha chain is a regulatory subunit. The chain is ATP synthase subunit alpha from Synechococcus sp. (strain RCC307).